The primary structure comprises 144 residues: Maximins 3/H9 type 2 (144 aa).

An N-terminal signal peptide occupies residues 1–18 (MNFKYIVAVSFLIASAYA). Propeptides lie at residues 19-43 (RSVQNDEQSLSQRDVLEEESLREIR) and 74-123 (TAEE…KEKR). Isoleucine 143 carries the post-translational modification Isoleucine amide.

Belongs to the bombinin family. As to expression, expressed by the skin glands.

It is found in the secreted. Maximin-3 shows antibacterial activity against both Gram-positive and Gram-negative bacteria. It also shows antimicrobial activity against the fungus C.albicans, but not against A.flavus nor P.uticale. It has little hemolytic activity. It possess a significant cytotoxicity against tumor cell lines. It possess a significant anti-HIV activity. It shows high spermicidal activity. Its function is as follows. Maximin-H9 shows antimicrobial activity against bacteria and against the fungus C.albicans. Shows strong hemolytic activity. In Bombina maxima (Giant fire-bellied toad), this protein is Maximins 3/H9 type 2.